Consider the following 246-residue polypeptide: Anionic trypsin-2 (246 aa).

The signal sequence occupies residues 1-15 (MSALLILALVGAAVA). The propeptide at 16–23 (FPVDDDDK) is activation peptide. The Peptidase S1 domain occupies 24-244 (IVGGYTCRES…YVDWIQNTIA (221 aa)). 6 cysteine pairs are disulfide-bonded: Cys30-Cys160, Cys48-Cys64, Cys132-Cys233, Cys139-Cys206, Cys171-Cys185, and Cys196-Cys220. His63 serves as the catalytic Charge relay system. Residues Glu75, Asn77, Val80, and Glu85 each coordinate Ca(2+). Asp107 acts as the Charge relay system in catalysis. Ser200 acts as the Charge relay system in catalysis.

It belongs to the peptidase S1 family. Ca(2+) is required as a cofactor. Expressed in the pancreas, lung and kidney.

It is found in the secreted. The protein resides in the extracellular space. The enzyme catalyses Preferential cleavage: Arg-|-Xaa, Lys-|-Xaa.. The protein is Anionic trypsin-2 (Prss2) of Mus musculus (Mouse).